The chain runs to 380 residues: Cytochrome b (380 aa).

4 consecutive transmembrane segments (helical) span residues 34–54 (FGSL…LLAM), 78–99 (WLIR…YLHI), 114–134 (WNTG…GYVL), and 179–199 (FFAL…IHLT). Residues His-84 and His-98 each coordinate heme b. Heme b contacts are provided by His-183 and His-197. A ubiquinone is bound at residue His-202. Transmembrane regions (helical) follow at residues 227-247 (LKDA…ALFS), 289-309 (LGGV…PLLH), 321-341 (LSQL…WIGS), and 348-368 (FIII…ILFP).

Belongs to the cytochrome b family. The cytochrome bc1 complex contains 11 subunits: 3 respiratory subunits (MT-CYB, CYC1 and UQCRFS1), 2 core proteins (UQCRC1 and UQCRC2) and 6 low-molecular weight proteins (UQCRH/QCR6, UQCRB/QCR7, UQCRQ/QCR8, UQCR10/QCR9, UQCR11/QCR10 and a cleavage product of UQCRFS1). This cytochrome bc1 complex then forms a dimer. Requires heme b as cofactor.

It localises to the mitochondrion inner membrane. Functionally, component of the ubiquinol-cytochrome c reductase complex (complex III or cytochrome b-c1 complex) that is part of the mitochondrial respiratory chain. The b-c1 complex mediates electron transfer from ubiquinol to cytochrome c. Contributes to the generation of a proton gradient across the mitochondrial membrane that is then used for ATP synthesis. This is Cytochrome b (MT-CYB) from Oceanodroma tethys (Wedge-rumped storm-petrel).